Consider the following 232-residue polypeptide: Enolase-phosphatase E1 (232 aa).

It belongs to the HAD-like hydrolase superfamily. MasA/MtnC family. Monomer. Mg(2+) is required as a cofactor.

It carries out the reaction 5-methylsulfanyl-2,3-dioxopentyl phosphate + H2O = 1,2-dihydroxy-5-(methylsulfanyl)pent-1-en-3-one + phosphate. Its pathway is amino-acid biosynthesis; L-methionine biosynthesis via salvage pathway; L-methionine from S-methyl-5-thio-alpha-D-ribose 1-phosphate: step 3/6. It participates in amino-acid biosynthesis; L-methionine biosynthesis via salvage pathway; L-methionine from S-methyl-5-thio-alpha-D-ribose 1-phosphate: step 4/6. Its function is as follows. Bifunctional enzyme that catalyzes the enolization of 2,3-diketo-5-methylthiopentyl-1-phosphate (DK-MTP-1-P) into the intermediate 2-hydroxy-3-keto-5-methylthiopentenyl-1-phosphate (HK-MTPenyl-1-P), which is then dephosphorylated to form the acireductone 1,2-dihydroxy-3-keto-5-methylthiopentene (DHK-MTPene). The protein is Enolase-phosphatase E1 of Xylella fastidiosa (strain Temecula1 / ATCC 700964).